The primary structure comprises 597 residues: MMENNRNYFVAIALSVLILIAWQFFYVSPKMEKDRIAAEKAQQAQSQPGTQQAAPGQAAPGQALPGGAIPSAAESRDQAIGKSARVAIDTPALSGSINLTGARFDDLKLKGYRETVDPKSPVITLFSPAETADGYFTEIGYIGSDATGSVPGPQTVWMLSGGDKLTPSTPVTLSYTNDKGITFTRTISVDDRYMFEVVDSIKNDAAAAVSLSSYGRVTRFNKPSTPSIYVLHEGFVGVAGEHGLQEVGYSDVEDEEPVEPGKSTGGWLGITDKYWAATIVPPQDTPFDIRFSHFADGRPRYQSDYKSDAVTVAPGQSAEVKNLIFAGAKEVPVVDNYELTYSIPNFDKLIDWGWFYFITKPMFKMMDFFFRLFGNFGIAILITTIVVKLIFFPLANKQYASMANMKKVQPKMEELKKKFGDDRMGLQQAMMQLYKEEKINPLAGCWPILIQIPVFFALYKVIYVTIEMRHAPFFGWIQDLSAPDPTTIINLFGLLPFEGPAFLHLGIWPIVMGVTMFLQMRMNPTPPDPTQAMLFTWMPVVFTFMLASFPAGLVIYWAWNNTLSILQQGIIMKRQGVKVELFDNLKSLFSKKPKPAE.

The chain crosses the membrane as a helical span at residues 8–28; the sequence is YFVAIALSVLILIAWQFFYVS. Residues 38–75 form a disordered region; that stretch reads AEKAQQAQSQPGTQQAAPGQAAPGQALPGGAIPSAAES. The span at 41-70 shows a compositional bias: low complexity; that stretch reads AQQAQSQPGTQQAAPGQAAPGQALPGGAIP. 4 consecutive transmembrane segments (helical) span residues 372-392, 446-466, 491-511, and 535-555; these read LFGN…LIFF, WPIL…YVTI, LFGL…WPIV, and FTWM…GLVI.

The protein belongs to the OXA1/ALB3/YidC family. Type 1 subfamily. In terms of assembly, interacts with the Sec translocase complex via SecD. Specifically interacts with transmembrane segments of nascent integral membrane proteins during membrane integration.

The protein resides in the cell inner membrane. Required for the insertion and/or proper folding and/or complex formation of integral membrane proteins into the membrane. Involved in integration of membrane proteins that insert both dependently and independently of the Sec translocase complex, as well as at least some lipoproteins. Aids folding of multispanning membrane proteins. The chain is Membrane protein insertase YidC from Sinorhizobium medicae (strain WSM419) (Ensifer medicae).